We begin with the raw amino-acid sequence, 345 residues long: Protein RecA (345 aa).

An ATP-binding site is contributed by 65–72 (GPESSGKT). Residues 326 to 336 (EKFQPAEAARE) show a composition bias toward basic and acidic residues. Residues 326–345 (EKFQPAEAAREEGDDEGEDE) form a disordered region.

It belongs to the RecA family.

It is found in the cytoplasm. In terms of biological role, can catalyze the hydrolysis of ATP in the presence of single-stranded DNA, the ATP-dependent uptake of single-stranded DNA by duplex DNA, and the ATP-dependent hybridization of homologous single-stranded DNAs. It interacts with LexA causing its activation and leading to its autocatalytic cleavage. In Stenotrophomonas maltophilia (strain K279a), this protein is Protein RecA.